The primary structure comprises 393 residues: MSDRVKITPMTLNFGPQHPAAHGVMRLVLEMGGEVIERIDPHIGLLHRGTEKLIEYKTYLQALPYFDRLDYVSPMCQEHAYSLCVEKLLKCEIPIRAKYLRVIFCELTRILNHLLNISSQALDIGAMTPLLWMFEEREKILGFYERASGARFHSAYIRPGGVAADVPDDLIDDIFKFIKTFPKFIDDVDELLTENRIWKQRNVDIGIVSKEQALDWGFSGPMLRACGIPWDLRKSQPYEIYEDLEFEIPIGKKGDCYDRYLVRMAEIRQSIKLLEQCLNRLPNGPIKTDDRKIAPPKRSEMKESMEALIHHFKLYSEGYSVPIGETYMAVEAPKGEFGVYIVSDGTNKPYRCRIRAPGFAHLQAIDMMAKGHMLADLTAIIGSLDIVFGEIDR.

This sequence belongs to the complex I 49 kDa subunit family. In terms of assembly, NDH-1 is composed of 14 different subunits. Subunits NuoB, C, D, E, F, and G constitute the peripheral sector of the complex.

It is found in the cell inner membrane. The catalysed reaction is a quinone + NADH + 5 H(+)(in) = a quinol + NAD(+) + 4 H(+)(out). Functionally, NDH-1 shuttles electrons from NADH, via FMN and iron-sulfur (Fe-S) centers, to quinones in the respiratory chain. The immediate electron acceptor for the enzyme in this species is believed to be ubiquinone. Couples the redox reaction to proton translocation (for every two electrons transferred, four hydrogen ions are translocated across the cytoplasmic membrane), and thus conserves the redox energy in a proton gradient. This is NADH-quinone oxidoreductase subunit D from Ehrlichia chaffeensis (strain ATCC CRL-10679 / Arkansas).